Reading from the N-terminus, the 321-residue chain is 4-hydroxy-3-methylbut-2-enyl diphosphate reductase (321 aa).

Residue Cys-12 coordinates [4Fe-4S] cluster. (2E)-4-hydroxy-3-methylbut-2-enyl diphosphate-binding residues include His-41 and His-74. Dimethylallyl diphosphate-binding residues include His-41 and His-74. 2 residues coordinate isopentenyl diphosphate: His-41 and His-74. Residue Cys-96 participates in [4Fe-4S] cluster binding. Residue His-124 coordinates (2E)-4-hydroxy-3-methylbut-2-enyl diphosphate. His-124 serves as a coordination point for dimethylallyl diphosphate. His-124 provides a ligand contact to isopentenyl diphosphate. The Proton donor role is filled by Glu-126. Position 167 (Thr-167) interacts with (2E)-4-hydroxy-3-methylbut-2-enyl diphosphate. Cys-197 contributes to the [4Fe-4S] cluster binding site. Positions 225, 226, 227, and 269 each coordinate (2E)-4-hydroxy-3-methylbut-2-enyl diphosphate. Positions 225, 226, 227, and 269 each coordinate dimethylallyl diphosphate. Isopentenyl diphosphate-binding residues include Ser-225, Ser-226, Asn-227, and Ser-269.

Belongs to the IspH family. As to quaternary structure, homodimer. The cofactor is [4Fe-4S] cluster.

It catalyses the reaction isopentenyl diphosphate + 2 oxidized [2Fe-2S]-[ferredoxin] + H2O = (2E)-4-hydroxy-3-methylbut-2-enyl diphosphate + 2 reduced [2Fe-2S]-[ferredoxin] + 2 H(+). It carries out the reaction dimethylallyl diphosphate + 2 oxidized [2Fe-2S]-[ferredoxin] + H2O = (2E)-4-hydroxy-3-methylbut-2-enyl diphosphate + 2 reduced [2Fe-2S]-[ferredoxin] + 2 H(+). It functions in the pathway isoprenoid biosynthesis; dimethylallyl diphosphate biosynthesis; dimethylallyl diphosphate from (2E)-4-hydroxy-3-methylbutenyl diphosphate: step 1/1. It participates in isoprenoid biosynthesis; isopentenyl diphosphate biosynthesis via DXP pathway; isopentenyl diphosphate from 1-deoxy-D-xylulose 5-phosphate: step 6/6. Catalyzes the conversion of 1-hydroxy-2-methyl-2-(E)-butenyl 4-diphosphate (HMBPP) into a mixture of isopentenyl diphosphate (IPP) and dimethylallyl diphosphate (DMAPP). Acts in the terminal step of the DOXP/MEP pathway for isoprenoid precursor biosynthesis. The polypeptide is 4-hydroxy-3-methylbut-2-enyl diphosphate reductase (Escherichia coli O6:K15:H31 (strain 536 / UPEC)).